The following is a 196-amino-acid chain: Calcium channel flower (196 aa).

A run of 3 helical transmembrane segments spans residues 35-55, 70-92, and 113-133; these read LGIV…LSII, LAGF…QVGS, and AVPP…GLIF.

Belongs to the calcium channel flower family. Homomultimer. Associates with the dally/ magu complex.

The protein localises to the cell membrane. It is found in the cytoplasmic vesicle. It localises to the secretory vesicle. The protein resides in the synaptic vesicle membrane. Its subcellular location is the presynaptic cell membrane. The protein localises to the endosome. Channel activity is inhibited by La(3+), which reduces Ca(2+) influx and thus inhibits it's function in promoting activity-dependent bulk endocytosis (ADBE) in response to high stimuli. In terms of biological role, transmembrane protein which mediates synaptic endocytosis, fitness-based cell culling, neuronal culling, morphogen gradient scaling, and calcium transport. Regulates synaptic endocytosis and hence couples exo- with endocytosis. Controls two major modes of synaptic vesicle (SV) endocytosis in the synaptic boutons of neuromuscular junctions (NMJs); Ca(2+) channel-independent Clathrin-mediated endocytosis (CME) in response to mild stimulation, and Ca(2+) channel-dependent activity-dependent bulk endocytosis (ADBE) in response to strong stimulation. Functions in ADBE and subsequent SV reformation from bulk endosomes by initiating Ca(2+) channel-dependent phosphatidylinositol 4,5-bisphosphate (PtdIns(4,5)P2) compartmentalization in synaptic boutons. There it acts at the periactive zone to provide the low Ca(2+) levels required to initiate Calcineurin activation and upregulate PtdIns(4,5)P2. Conversely PtdIns(4,5)P2 enhances fwe Ca(2+) channel-activity, establishing a positive feedback loop that induces PtdIns(4,5)P2 microdomain at the periactive zone. These microdomains trigger bulk membrane invagination (i.e. ADBE) by triggering actin polymerization while also promoting localization of fwe to bulk endosomes, thereby removing the ADBE trigger to reduce endocytosis and prevent excess membrane uptake. PtdIns(4,5)P2 then promotes SV reformation from the bulk endosomes, to coordinate ADBE and subsequent SV reformation. Different combinations of the flower isoforms at the cell membrane are also required for the identification and elimination of suboptimal or supernumerary cells during development, regeneration, and adulthood. Required for the recognition and elimination of unfit cells in the developing wing during cell competition. In the developing pupal retina, mediates the elimination of unwanted postmitotic neurons, including supernumerary photoreceptor neurons that form at the periphery of the retina and are contained within incomplete ommatidia units. Also required for efficient elimination and replacement of old neurons by newly generated neurons during regeneration in the adult brain following mechanical injury. Downstream of the flower fitness fingerprints, cells identified as unwanted or unfit are eliminated via apoptosis through the expression of ahuizotl (azot). However, the cells marked for elimination by the flower isoforms only undergo apoptosis if additional thresholds are met; (1) their neighboring fit/healthy cells express different levels of the fwe isoforms, and (2) the levels of the protective signal SPARC expressed by the loser or unwanted cells are unable to inhibit caspase activation. These additional thresholds for flower-mediated apoptosis, allows useful cells to recover from transient and limited stress before they are unnecessarily eliminated. Functions with dally and magu in a mechanism of scaling, which utilises apoptosis to ensure that the dpp morphogen gradient, which mediates organ growth, remains proportional to the size of the growing wing. In this mechanism, fwe represses dally- and Magu-dependent activity in expanding the gradient, and dally/Magu inhibits fwe-dependent apoptosis to keep cell death rate low. When the levels of these different proteins are optimally regulated the gradient correctly scales with organ growth but when this fails, fwe-mediated apoptosis is activated to trim the developing tissue to match the correct size of the gradient. This is Calcium channel flower from Drosophila grimshawi (Hawaiian fruit fly).